The chain runs to 210 residues: uncharacterized protein (210 aa).

Its subcellular location is the mitochondrion. This is an uncharacterized protein from Schizosaccharomyces pombe (strain 972 / ATCC 24843) (Fission yeast).